Reading from the N-terminus, the 458-residue chain is Major capsid protein (458 aa).

Residues 21–110 (LEGLTAAQKA…EIKSLLTARE (90 aa)) are a coiled coil.

Belongs to the HK97 phage major capsid protein family. Interacts with the decoration protein; each hexon binds a single copy of the decoration protein. Interacts with the portal protein. In terms of processing, the scaffolding domain delta is cleaved by the prohead protease and lost after assembly. The major capsid protein precursors together with both the portal complex and the maturation protease form prohead I. All copies of the major capsid protein precursor are cleaved to the mature major capsid protein by release of the scaffolding domain delta, yielding the metastable prohead II.

It localises to the virion. Functionally, major capsid protein that self-associates to form 120 hexamers and 11 pentamers, building the T=13 icosahedral capsid which about 860 Angstroms in diameter. Responsible for its self-assembly into a procapsid. The phage does not need to encode a separate scaffolfing protein because its capsid protein contains the delta domain that carries that function. The capsid gains its final stability through the reorganization of the subunits that takes place upon expansion. DNA encapsidation through the portal triggers capsid expansion and the binding of the decoration protein to the capsid exterior. Might play a role in counteracting the host Pycsar defense system that is mediated by pyrimidine cyclases and leads to abortive infection. This is Major capsid protein from Escherichia coli (Enterobacteria phage T5).